The following is a 162-amino-acid chain: Putative ureidoglycolate lyase (162 aa).

It belongs to the ureidoglycolate lyase family. In terms of assembly, homodimer. Ni(2+) serves as cofactor.

The catalysed reaction is (S)-ureidoglycolate = urea + glyoxylate. Its pathway is nitrogen metabolism; (S)-allantoin degradation. In terms of biological role, catalyzes the catabolism of the allantoin degradation intermediate (S)-ureidoglycolate, generating urea and glyoxylate. Involved in the utilization of allantoin as nitrogen source. The polypeptide is Putative ureidoglycolate lyase (Agrobacterium fabrum (strain C58 / ATCC 33970) (Agrobacterium tumefaciens (strain C58))).